Here is a 118-residue protein sequence, read N- to C-terminus: UPF0382 membrane protein C1782.12c (118 aa).

The N-terminal stretch at 1 to 18 (MTIWNVAALTGLLSVGLG) is a signal peptide. Over 19 to 40 (AYGSHGLQKRVQDPHLLKSWST) the chain is Lumenal. A helical transmembrane segment spans residues 41–61 (ACTYLMFHSLATMAVSLHPVY). Residues 62–67 (GKSRWT) are Cytoplasmic-facing. The chain crosses the membrane as a helical span at residues 68-88 (GPLLITGSCLFSGTIYGLCLL). At 89–96 (PKGHSLRR) the chain is on the lumenal side. The helical transmembrane segment at 97-117 (ILGPLTPIGGLVMLTGWATML) threads the bilayer. A topological domain (cytoplasmic) is located at residue valine 118.

This sequence belongs to the UPF0382 family.

Its subcellular location is the endoplasmic reticulum membrane. The chain is UPF0382 membrane protein C1782.12c from Schizosaccharomyces pombe (strain 972 / ATCC 24843) (Fission yeast).